Consider the following 491-residue polypeptide: Cytochrome P450 2F3 (491 aa).

Position 436 (Cys-436) interacts with heme.

It belongs to the cytochrome P450 family. It depends on heme as a cofactor. Lung specific.

Its subcellular location is the endoplasmic reticulum membrane. The protein resides in the microsome membrane. The catalysed reaction is an organic molecule + reduced [NADPH--hemoprotein reductase] + O2 = an alcohol + oxidized [NADPH--hemoprotein reductase] + H2O + H(+). Bioactivates 3-methylindole (3MI) by dehydrogenation to the putative electrophile 3-methylene-indolenine. Stereoselectively catalyzes the formation of the 1R,2S-oxide from naphthalene. Lack activity with other common P450 substrates including 7-ethoxycoumarin. This chain is Cytochrome P450 2F3 (CYP2F3), found in Capra hircus (Goat).